The chain runs to 551 residues: ATP-dependent DNA helicase XPD (551 aa).

Residues 1–228 (MLKLRDWQEK…KLLNQLREVV (228 aa)) form the Helicase ATP-binding domain. 29 to 36 (APTGSGKT) lines the ATP pocket. Residues C88, C102, C105, and C137 each coordinate [4Fe-4S] cluster. A DEAH box motif is present at residues 180 to 183 (DEAH).

The protein belongs to the helicase family. RAD3/XPD subfamily. In terms of assembly, monomer. [4Fe-4S] cluster is required as a cofactor.

The catalysed reaction is Couples ATP hydrolysis with the unwinding of duplex DNA at the replication fork by translocating in the 5'-3' direction. This creates two antiparallel DNA single strands (ssDNA). The leading ssDNA polymer is the template for DNA polymerase III holoenzyme which synthesizes a continuous strand.. The enzyme catalyses ATP + H2O = ADP + phosphate + H(+). Functionally, ATP-dependent 5'-3' DNA helicase. Thought to be involved in nucleotide excision repair (NER) of DNA. This chain is ATP-dependent DNA helicase XPD, found in Sulfolobus acidocaldarius (strain ATCC 33909 / DSM 639 / JCM 8929 / NBRC 15157 / NCIMB 11770).